The primary structure comprises 184 residues: Endoribonuclease YbeY (184 aa).

2 stretches are compositionally biased toward acidic residues: residues 1–11 (MTVEVGADENP) and 19–29 (DGAGDESDDED). Positions 1-37 (MTVEVGADENPDFAHDETDGAGDESDDEDAQGRDPEL) are disordered. The Zn(2+) site is built by His-146, His-150, and His-156.

It belongs to the endoribonuclease YbeY family. Requires Zn(2+) as cofactor.

The protein localises to the cytoplasm. Single strand-specific metallo-endoribonuclease involved in late-stage 70S ribosome quality control and in maturation of the 3' terminus of the 16S rRNA. In Burkholderia mallei (strain ATCC 23344), this protein is Endoribonuclease YbeY.